A 196-amino-acid polypeptide reads, in one-letter code: Large ribosomal subunit protein eL15 (196 aa).

The tract at residues 162-196 is disordered; the sequence is RGLTNAGRSNRGLQNRGKGAEHTRPSAGSGSRRGK.

It belongs to the eukaryotic ribosomal protein eL15 family.

This is Large ribosomal subunit protein eL15 from Haloquadratum walsbyi (strain DSM 16790 / HBSQ001).